The sequence spans 259 residues: MRVLVSNDDGVDAPGIQILAEALRRAGHEVMVVAPDRDRSGASNSLTLDVPIRTRRIDAQTCAVAGTPTDCVHLALTGMLDYDPDIVVSGINNSANLGDDVIYSGTVSAAMEGRFLGLPAVAVSLVTQNHEAHHFETAARAAVEIVARLKADPLPADTILNVNVPDLAWADVLGFEVTRLGNRHRSEPCVPQNDPRGRTVYWIGPAGPEQDAGAGTDFHAVRTGHISITPIHVDLTRYQALDTVAGWVGGLTAALDAPA.

A divalent metal cation-binding residues include D8, D9, S40, and N92.

It belongs to the SurE nucleotidase family. A divalent metal cation is required as a cofactor.

It is found in the cytoplasm. It catalyses the reaction a ribonucleoside 5'-phosphate + H2O = a ribonucleoside + phosphate. Its function is as follows. Nucleotidase that shows phosphatase activity on nucleoside 5'-monophosphates. The sequence is that of 5'-nucleotidase SurE from Xanthomonas campestris pv. campestris (strain 8004).